The chain runs to 179 residues: Diphosphoinositol polyphosphate phosphohydrolase 2 (179 aa).

Residues R9, 17-19 (KKR), and 38-40 (SSR) each bind substrate. The 127-residue stretch at 17–143 (KKRAACLCFR…VHAEYLEKLK (127 aa)) folds into the Nudix hydrolase domain. Residues G49 and E65 each contribute to the Mg(2+) site. The Nudix box signature appears at 50–71 (GGMEPEEEPGGAAVREVYEEAG). Residue E68 is the Proton acceptor of the active site. E69 provides a ligand contact to Mg(2+). Substrate is bound by residues 88–90 (RKH), R114, and K132.

The protein belongs to the Nudix hydrolase family. DIPP subfamily. Mg(2+) is required as a cofactor. Requires Mn(2+) as cofactor.

The protein resides in the cytoplasm. The enzyme catalyses diphospho-myo-inositol polyphosphate + H2O = myo-inositol polyphosphate + phosphate.. It carries out the reaction 5-diphospho-1D-myo-inositol 1,2,3,4,6-pentakisphosphate + H2O = 1D-myo-inositol hexakisphosphate + phosphate + H(+). It catalyses the reaction 3,5-bis(diphospho)-1D-myo-inositol 1,2,4,6-tetrakisphosphate + H2O = 3-diphospho-1D-myo-inositol 1,2,4,5,6-pentakisphosphate + phosphate + 2 H(+). The catalysed reaction is 5-diphospho-1D-myo-inositol 1,3,4,6-tetrakisphosphate + H2O = 1D-myo-inositol 1,3,4,5,6-pentakisphosphate + phosphate + H(+). The enzyme catalyses P(1),P(6)-bis(5'-adenosyl) hexaphosphate + H2O = 2 ATP + 2 H(+). It carries out the reaction P(1),P(5)-bis(5'-adenosyl) pentaphosphate + H2O = ADP + ATP + 2 H(+). It catalyses the reaction 5-phospho-alpha-D-ribose 1-diphosphate + H2O = alpha-D-ribose 1,5-bisphosphate + phosphate + H(+). Its function is as follows. Cleaves the beta-phosphate from diphosphoinositol polyphosphates such as PP-InsP5 (diphosphoinositol pentakisphosphate), PP-InsP4 (diphosphoinositol tetrakisphosphate) and [PP]2-InsP4 (bisdiphosphoinositol tetrakisphosphate), suggesting that it may play a role in signal transduction. Diadenosine polyphosphates, particularly Ap6A (P(1),P(6)-bis(5a-adenosyl) hexaphosphate) and Ap5A (P(1),P(5)-bis(5'-adenosyl) pentaphosphate) are downstream effectors of a signaling cascade that regulates cardiac KATP channels, can also be substrates, although with lower preference than the diphosphoinositol polyphosphates. Can also catalyze the hydrolysis of 5-phosphoribose 1-diphosphate, generating the glycolytic activator ribose 1,5-bisphosphate. Does not play a role in U8 snoRNA decapping activity. Binds U8 snoRNA. The sequence is that of Diphosphoinositol polyphosphate phosphohydrolase 2 from Mus musculus (Mouse).